A 421-amino-acid polypeptide reads, in one-letter code: Glutamyl-tRNA reductase (421 aa).

Substrate is bound by residues 49-52, serine 109, 114-116, and glutamine 120; these read TCNR and EPQ. Cysteine 50 (nucleophile) is an active-site residue. Residue 189–194 participates in NADP(+) binding; sequence GLGQIG.

It belongs to the glutamyl-tRNA reductase family. In terms of assembly, homodimer.

The catalysed reaction is (S)-4-amino-5-oxopentanoate + tRNA(Glu) + NADP(+) = L-glutamyl-tRNA(Glu) + NADPH + H(+). It functions in the pathway porphyrin-containing compound metabolism; protoporphyrin-IX biosynthesis; 5-aminolevulinate from L-glutamyl-tRNA(Glu): step 1/2. Functionally, catalyzes the NADPH-dependent reduction of glutamyl-tRNA(Glu) to glutamate 1-semialdehyde (GSA). This chain is Glutamyl-tRNA reductase, found in Limosilactobacillus reuteri (strain DSM 20016) (Lactobacillus reuteri).